The following is a 229-amino-acid chain: GTP cyclohydrolase 1 (229 aa).

Residues 1 to 31 (MFRESDNTIAPSNQDLNKPVVDKEQPAERTP) form a disordered region. Over residues 7–16 (NTIAPSNQDL) the composition is skewed to polar residues. 3 residues coordinate Zn(2+): Cys117, His120, and Cys188.

The protein belongs to the GTP cyclohydrolase I family. As to quaternary structure, toroid-shaped homodecamer, composed of two pentamers of five dimers.

It catalyses the reaction GTP + H2O = 7,8-dihydroneopterin 3'-triphosphate + formate + H(+). It functions in the pathway cofactor biosynthesis; 7,8-dihydroneopterin triphosphate biosynthesis; 7,8-dihydroneopterin triphosphate from GTP: step 1/1. The sequence is that of GTP cyclohydrolase 1 from Rhodopirellula baltica (strain DSM 10527 / NCIMB 13988 / SH1).